Reading from the N-terminus, the 696-residue chain is Junctophilin-2 (696 aa).

Topologically, residues 1–674 (MSGGRFDFDD…EVEVEEVPNT (674 aa)) are cytoplasmic. MORN repeat units follow at residues 14–36 (YCGG…KGQG), 38–59 (YSGS…SGNT), 60–79 (FEGY…TKGR), 82–104 (YKGE…NSGA), 106–128 (YEGT…DGGT), and 129–151 (YQGQ…PYGM). Phosphoserine occurs at positions 162 and 165. 2 disordered regions span residues 164-192 (SSLR…SPPV) and 246-273 (LSSG…AAPF). MORN repeat units follow at residues 285-307 (YMGE…SGLR) and 308-330 (YEGE…DGHR). A Bipartite nuclear localization signal motif is present at residues 345-359 (KRRVLPLKSSKVRQK). Residues 439-664 (NSESLLEPPE…RKEVAQAKEA (226 aa)) are disordered. Residues S440, S442, and S462 each carry the phosphoserine modification. Over residues 457–471 (ERPRESPQLHERETP) the composition is skewed to basic and acidic residues. Phosphothreonine is present on T470. The segment covering 474–487 (EGGPPSPAGTPPQP) has biased composition (pro residues). Position 479 is a phosphoserine (S479). T483 is subject to Phosphothreonine. A Nuclear localization signal motif is present at residues 488–492 (KRPRP). S527 and S533 each carry phosphoserine. Residues 573–585 (PLEDEQEPEPEPE) are compositionally biased toward acidic residues. S593, S597, and S613 each carry phosphoserine. The segment covering 631 to 644 (AEPKAKARKTEARG) has biased composition (basic and acidic residues). A helical; Anchor for type IV membrane protein membrane pass occupies residues 675–695 (VLICMVILLNIGLAILFVHLL).

It belongs to the junctophilin family. As to quaternary structure, interacts with TRPC3. Interacts with BAG5 and HSPA8; the interaction with HSPA8 is increased in the presence of BAG5. Interacts with MEF2C. Post-translationally, proteolytically cleaved by calpain in response to cardiac stress. The major cleavage site takes place at the C-terminus and leads to the release of the Junctophilin-2 N-terminal fragment chain (JP2NT). In terms of processing, phosphorylation on Ser-165, probably by PKC, affects RYR1-mediated calcium ion release, interaction with TRPC3, and skeletal muscle myotubule development. In terms of tissue distribution, abundantly expressed in skeletal muscle and heart. Weak expression in stomach and lung.

It is found in the cell membrane. The protein localises to the sarcoplasmic reticulum membrane. The protein resides in the endoplasmic reticulum membrane. Its subcellular location is the nucleus. Membrane-binding protein that provides a structural bridge between the plasma membrane and the sarcoplasmic reticulum and is required for normal excitation-contraction coupling in cardiomyocytes. Provides a structural foundation for functional cross-talk between the cell surface and intracellular Ca(2+) release channels by maintaining the 12-15 nm gap between the sarcolemma and the sarcoplasmic reticulum membranes in the cardiac dyads. Necessary for proper intracellular Ca(2+) signaling in cardiac myocytes via its involvement in ryanodine receptor-mediated calcium ion release. Contributes to the construction of skeletal muscle triad junctions. Its function is as follows. Transcription repressor required to safeguard against the deleterious effects of cardiac stress. Generated following cleavage of the Junctophilin-2 chain by calpain in response to cardiac stress in cardiomyocytes. Following cleavage and release from the membrane, translocates to the nucleus, binds DNA and represses expression of genes implicated in cell growth and differentiation, hypertrophy, inflammation and fibrosis. Modifies the transcription profile and thereby attenuates pathological remodeling in response to cardiac stress. Probably acts by competing with MEF2 transcription factors and TATA-binding proteins. The chain is Junctophilin-2 from Mus musculus (Mouse).